Consider the following 193-residue polypeptide: Oocyte-secreted protein 3 (193 aa).

An N-terminal signal peptide occupies residues 1–22 (MKDFVRLQSSFLLCTILTLSEQ). Asn64, Asn130, Asn148, Asn151, Asn165, and Asn178 each carry an N-linked (GlcNAc...) asparagine glycan.

It belongs to the PLAC1 family.

The protein resides in the secreted. In Homo sapiens (Human), this protein is Oocyte-secreted protein 3.